We begin with the raw amino-acid sequence, 1127 residues long: Cellulose synthase-like protein D1 (1127 aa).

The segment at methionine 1 to valine 24 is disordered. A run of 2 helical transmembrane segments spans residues valine 262 to methionine 282 and alanine 292 to leucine 312. Active-site residues include aspartate 392 and aspartate 828. The next 6 helical transmembrane spans lie at valine 910 to valine 930, threonine 936 to isoleucine 956, leucine 982 to leucine 1002, serine 1025 to phenylalanine 1045, leucine 1059 to glycine 1079, and threonine 1089 to isoleucine 1109.

Belongs to the glycosyltransferase 2 family. Plant cellulose synthase-like D subfamily.

It is found in the golgi apparatus membrane. Its function is as follows. Thought to be a Golgi-localized beta-glycan synthase that polymerize the backbones of noncellulosic polysaccharides (hemicelluloses) of plant cell wall. The protein is Cellulose synthase-like protein D1 (CSLD1) of Oryza sativa subsp. indica (Rice).